A 1960-amino-acid polypeptide reads, in one-letter code: Transcription factor 20 (1960 aa).

Residues 1 to 18 (MQSFREQSSYHGNQQSYP) show a composition bias toward polar residues. The segment at 1 to 287 (MQSFREQSSY…GSNAQAYGTQ (287 aa)) is disordered. The span at 42-60 (GGTGGSSGSSGSGSGGGRR) shows a compositional bias: gly residues. At Arg60 the chain carries Omega-N-methylarginine. Positions 61-75 (GAAAAAAAMASETSG) are enriched in low complexity. Positions 122–131 (QGSSFGNQYG) are enriched in polar residues. Low complexity predominate over residues 164–192 (SAQYQQQASSQQQQQQVQQLRQQLYQSHQ). Positions 193-219 (PLPQATGQPASSSSHLQPMQRPSTLPS) are enriched in polar residues. The segment covering 236-259 (QSSASSSSSSSFPSPQRFSQSGQS) has biased composition (low complexity). Composition is skewed to polar residues over residues 260–270 (YDGSYNVNAGS) and 277–287 (VGSNAQAYGTQ). Residue Lys304 forms a Glycyl lysine isopeptide (Lys-Gly) (interchain with G-Cter in SUMO2) linkage. 2 disordered regions span residues 305 to 328 (IPQG…SQHV) and 360 to 392 (FHQN…LMQT). Low complexity-rich tracts occupy residues 306–322 (PQGT…QQQQ) and 368–388 (SNPS…TPSP). Residues Ser419 and Ser430 each carry the phosphoserine modification. The tract at residues 476 to 748 (SDALTPQKKT…HGERKGRNEK (273 aa)) is disordered. Polar residues-rich tracts occupy residues 497–508 (SCTNSEGSSQPE) and 537–547 (LSGQSTSSDTT). Ser538, Ser559, Ser574, and Ser583 each carry phosphoserine. Lys602 is subject to N6-acetyllysine. A compositionally biased stretch (basic and acidic residues) spans 616-628 (RVEKPGGQDKGSQ). Ser640 is subject to Phosphoserine. Residues 665 to 677 (GNKNGDNNSNHNG) show a composition bias toward low complexity. Residues 693 to 702 (TSRTEPSKSP) show a composition bias toward polar residues. Residues Lys710, Lys733, Lys748, Lys823, Lys832, and Lys844 each participate in a glycyl lysine isopeptide (Lys-Gly) (interchain with G-Cter in SUMO2) cross-link. The segment covering 732-748 (EKGDFTGHGERKGRNEK) has biased composition (basic and acidic residues). Ser871 carries the post-translational modification Phosphoserine. Residues Lys920 and Lys922 each participate in a glycyl lysine isopeptide (Lys-Gly) (interchain with G-Cter in SUMO2) cross-link. Positions 920 to 1037 (KLKSQSGQIK…GDPHHMNPHM (118 aa)) are disordered. Residue Lys929 forms a Glycyl lysine isopeptide (Lys-Gly) (interchain with G-Cter in SUMO1); alternate linkage. Lys929 is covalently cross-linked (Glycyl lysine isopeptide (Lys-Gly) (interchain with G-Cter in SUMO2); alternate). Polar residues predominate over residues 936-945 (SKSQASFNNK). Basic and acidic residues predominate over residues 946–961 (KSGDHCHPPSIKHESY). A Glycyl lysine isopeptide (Lys-Gly) (interchain with G-Cter in SUMO2) cross-link involves residue Lys957. Phosphoserine is present on residues Ser966 and Ser1005. A Glycyl lysine isopeptide (Lys-Gly) (interchain with G-Cter in SUMO2) cross-link involves residue Lys1015. Arg1024 is modified (omega-N-methylarginine). Ser1053 carries the phosphoserine modification. Residues Lys1086, Lys1098, Lys1137, Lys1173, Lys1178, Lys1183, Lys1210, Lys1231, Lys1267, and Lys1274 each participate in a glycyl lysine isopeptide (Lys-Gly) (interchain with G-Cter in SUMO2) cross-link. Disordered regions lie at residues 1110-1142 (AAAQ…DKDG), 1162-1285 (RCLM…GRLL), and 1303-1331 (SHSQ…CPAV). Residues 1130–1142 (DRVRSPLKNDKDG) show a composition bias toward basic and acidic residues. The interval 1170–1191 (LPNKGMELKHGSQKLQESCWDL) is leucine-zipper. The Nuclear localization signal signature appears at 1254 to 1268 (RRRVRSFISPIPSKR). Residues 1304–1318 (HSQDIKSIPKRDSSK) are compositionally biased toward basic and acidic residues. Position 1305 is a phosphoserine (Ser1305). Lys1309 is covalently cross-linked (Glycyl lysine isopeptide (Lys-Gly) (interchain with G-Cter in SUMO2)). Ser1335 carries the post-translational modification Phosphoserine. Lys1338 participates in a covalent cross-link: Glycyl lysine isopeptide (Lys-Gly) (interchain with G-Cter in SUMO2). Ser1361 is subject to Phosphoserine. The interval 1384–1607 (DILSLKSGPP…TKQAVPIVEP (224 aa)) is disordered. Glycyl lysine isopeptide (Lys-Gly) (interchain with G-Cter in SUMO2) cross-links involve residues Lys1389, Lys1409, Lys1428, and Lys1446. The segment covering 1424–1451 (LHVEKPLPRSSEEWRGSVDDKVKTETHA) has biased composition (basic and acidic residues). Positions 1464 to 1477 (MTSTTSQKPGSNQG) are enriched in polar residues. Lys1510 is covalently cross-linked (Glycyl lysine isopeptide (Lys-Gly) (interchain with G-Cter in SUMO2)). Ser1522 is subject to Phosphoserine. A Glycyl lysine isopeptide (Lys-Gly) (interchain with G-Cter in SUMO2) cross-link involves residue Lys1524. The a.T hook DNA-binding region spans 1537–1551 (GKKKGRPIGSVNKQK). Residues 1555 to 1566 (QPPPPPPQPPQI) are compositionally biased toward pro residues. The short motif at 1576–1600 (KPKKQRQRRERRKPGAQPRKRKTKQ) is the Nuclear localization signal element. Residues 1578-1599 (KKQRQRRERRKPGAQPRKRKTK) show a composition bias toward basic residues. Residue Lys1613 forms a Glycyl lysine isopeptide (Lys-Gly) (interchain with G-Cter in SUMO2) linkage. 2 disordered regions span residues 1660–1683 (LVRG…KALP) and 1732–1839 (TLPK…PELE). Ser1669 is modified (phosphoserine). A phosphothreonine mark is found at Thr1671, Thr1762, and Thr1764. Positions 1785-1792 (RFKRRHRS) match the Nuclear localization signal motif. The C2HC pre-PHD-type; degenerate zinc-finger motif lies at 1829-1865 (PTTSEGGPELELQIPELPLDSNEFWVHEGCILWANGI). Residues 1885 to 1933 (MKCSHCQEAGATLGCYNKGCSFRYHYPCAIDADCLLHEENFSVRCPKHK) form a PHD-type zinc finger. The tract at residues 1939-1960 (PLPPLQNKTAKGSLSTEQSERG) is disordered. A compositionally biased stretch (polar residues) spans 1944 to 1960 (QNKTAKGSLSTEQSERG).

As to quaternary structure, homodimer. Interacts with RNF4 and JUN. Expressed in most tissues, except in ovary and prostate. Isoform 1 is exclusively expressed in brain, heart and testis, and this form predominates in liver and kidney. Isoform 2 predominates in lung.

The protein resides in the nucleus. Its function is as follows. Transcriptional activator that binds to the regulatory region of MMP3 and thereby controls stromelysin expression. It stimulates the activity of various transcriptional activators such as JUN, SP1, PAX6 and ETS1, suggesting a function as a coactivator. The chain is Transcription factor 20 (TCF20) from Homo sapiens (Human).